The chain runs to 544 residues: Calcium-dependent protein kinase 6 (544 aa).

Residues 1-47 (MGNSCRGSFKDKIYEGNHSRPEENSKSTTTTVSSVHSPTTDQDFSKQ) are disordered. Gly-2 is lipidated: N-myristoyl glycine. Positions 8-25 (SFKDKIYEGNHSRPEENS) are enriched in basic and acidic residues. Residues 26–40 (KSTTTTVSSVHSPTT) are compositionally biased toward low complexity. A Protein kinase domain is found at 85–343 (YTLSRKLGQG…AHEVLRHPWI (259 aa)). ATP-binding positions include 91-99 (LGQGQFGTT) and Lys-114. The active-site Proton acceptor is the Asp-209. A Phosphoserine modification is found at Ser-249. The autoinhibitory domain stretch occupies residues 349–379 (APDRALDPAVLSRLKQFSAMNKLKKMALKVI). 4 consecutive EF-hand domains span residues 386–421 (EEIA…YGST), 422–457 (LKDT…LNKL), 458–493 (EREE…HGMT), and 497–527 (LEDI…GNAG). Ca(2+) is bound by residues Asp-399, Asp-401, Ser-403, Glu-410, Asp-435, Asp-437, Ser-439, Thr-441, Glu-446, Asp-471, Asp-473, Ser-475, Tyr-477, Glu-482, Asp-505, Asp-507, Asp-509, Arg-511, and Glu-516.

The protein belongs to the protein kinase superfamily. Ser/Thr protein kinase family. CDPK subfamily. As to quaternary structure, interacts with SLAC1. Interacts with FD. As to expression, expressed in both guard cells and mesophyll cells. Expressed in the shoot apical meristem.

Its subcellular location is the cell membrane. The protein localises to the nucleus. It catalyses the reaction L-seryl-[protein] + ATP = O-phospho-L-seryl-[protein] + ADP + H(+). The catalysed reaction is L-threonyl-[protein] + ATP = O-phospho-L-threonyl-[protein] + ADP + H(+). Activated by calcium. Autophosphorylation may play an important role in the regulation of the kinase activity. In terms of biological role, may play a role in signal transduction pathways that involve calcium as a second messenger. Functions in abscisic acid (ABA) regulation of guard cell S-type anion- and Ca(2+)-permeable channels and stomatal closure. Phosphorylates FD. In Arabidopsis thaliana (Mouse-ear cress), this protein is Calcium-dependent protein kinase 6 (CPK6).